Reading from the N-terminus, the 248-residue chain is Phosphoadenosine 5'-phosphosulfate reductase (248 aa).

Catalysis depends on cysteine 239, which acts as the Nucleophile; cysteine thiosulfonate intermediate.

This sequence belongs to the PAPS reductase family. CysH subfamily.

It localises to the cytoplasm. It catalyses the reaction [thioredoxin]-disulfide + sulfite + adenosine 3',5'-bisphosphate + 2 H(+) = [thioredoxin]-dithiol + 3'-phosphoadenylyl sulfate. It functions in the pathway sulfur metabolism; hydrogen sulfide biosynthesis; sulfite from sulfate: step 3/3. Catalyzes the formation of sulfite from phosphoadenosine 5'-phosphosulfate (PAPS) using thioredoxin as an electron donor. The chain is Phosphoadenosine 5'-phosphosulfate reductase from Alteromonas mediterranea (strain DSM 17117 / CIP 110805 / LMG 28347 / Deep ecotype).